The primary structure comprises 314 residues: O-antigen chain rhamnosyltransferase RfbN (314 aa).

This sequence belongs to the glycosyltransferase 2 family.

It carries out the reaction alpha-D-galactosyl-di-trans,octa-cis-undecaprenyl diphosphate + dTDP-beta-L-rhamnose = alpha-L-rhamnosyl-(1-&gt;3)-alpha-D-galactosyl-1-diphospho-di-trans,octa-cis-undecaprenol + dTDP + H(+). Its pathway is bacterial outer membrane biogenesis; LPS O-antigen biosynthesis. Rhamnosyltransferase involved in the biosynthesis of the repeat unit of the lipopolysaccharide (LPS) O-antigen region. Catalyzes the addition of a rhamnose to the galactosyl-undecaprenyl diphosphate intermediate. This chain is O-antigen chain rhamnosyltransferase RfbN, found in Salmonella typhimurium (strain LT2 / SGSC1412 / ATCC 700720).